A 448-amino-acid polypeptide reads, in one-letter code: Rhodanese-like domain-containing protein 8, chloroplastic (448 aa).

The transit peptide at 1-23 (MRVSPAATLSVSLTTPLPITLTK) directs the protein to the chloroplast. A Rhodanese domain is found at 220–323 (SGKSYILLDV…YLKEEGTAEW (104 aa)). C283 acts as the Cysteine persulfide intermediate in catalysis.

The protein resides in the plastid. The protein localises to the chloroplast. The polypeptide is Rhodanese-like domain-containing protein 8, chloroplastic (STR8) (Arabidopsis thaliana (Mouse-ear cress)).